A 166-amino-acid chain; its full sequence is MFPMVTEFMNYGQQTVRAARYIGQGFIITLSHANRLPVTIQYPYEKLITSERFRGRIHFEFDKCIACEVCVRVCPIDLPVVDWKLETDIRKKRLLNYSIDFGICIFCGNCVEYCPTNCLSMTEEYELSTYHRHELNYNQIALGRLPMSIIDDYTIRTILNLPEIKT.

4Fe-4S ferredoxin-type domains follow at residues 55-84 (GRIHFEFDKCIACEVCVRVCPIDLPVVDWK) and 95-124 (LNYSIDFGICIFCGNCVEYCPTNCLSMTEE). Residues Cys-64, Cys-67, Cys-70, Cys-74, Cys-104, Cys-107, Cys-110, and Cys-114 each coordinate [4Fe-4S] cluster.

This sequence belongs to the complex I 23 kDa subunit family. In terms of assembly, NDH is composed of at least 16 different subunits, 5 of which are encoded in the nucleus. Requires [4Fe-4S] cluster as cofactor.

It localises to the plastid. The protein resides in the chloroplast thylakoid membrane. The catalysed reaction is a plastoquinone + NADH + (n+1) H(+)(in) = a plastoquinol + NAD(+) + n H(+)(out). It carries out the reaction a plastoquinone + NADPH + (n+1) H(+)(in) = a plastoquinol + NADP(+) + n H(+)(out). In terms of biological role, NDH shuttles electrons from NAD(P)H:plastoquinone, via FMN and iron-sulfur (Fe-S) centers, to quinones in the photosynthetic chain and possibly in a chloroplast respiratory chain. The immediate electron acceptor for the enzyme in this species is believed to be plastoquinone. Couples the redox reaction to proton translocation, and thus conserves the redox energy in a proton gradient. In Hofmeisteria fasciculata (Helogyne fasciculata), this protein is NAD(P)H-quinone oxidoreductase subunit I, chloroplastic.